Consider the following 132-residue polypeptide: MDVTRLLLATLLVFLCFFTAYSHLPPEEKLRDDRSLRSNSSVNLLDFPSVSIVALNKKSKQMSRKEAEKKRSSKKEASMKKVARPRTPLSAPCVATRDSCKPPAPACCDPCASCQCRFFRSACSCRVLSLNC.

The first 22 residues, 1 to 22 (MDVTRLLLATLLVFLCFFTAYS), serve as a signal peptide directing secretion. N-linked (GlcNAc...) asparagine glycosylation is present at Asn-39. A disordered region spans residues 58–88 (KSKQMSRKEAEKKRSSKKEASMKKVARPRTP). Positions 63–79 (SRKEAEKKRSSKKEASM) are enriched in basic and acidic residues. 5 disulfide bridges follow: Cys-93–Cys-108, Cys-100–Cys-114, Cys-107–Cys-125, Cys-111–Cys-132, and Cys-116–Cys-123. Residues 93–132 (CVATRDSCKPPAPACCDPCASCQCRFFRSACSCRVLSLNC) form the Agouti domain.

The protein localises to the secreted. Its function is as follows. Involved in the regulation of melanogenesis. The binding of ASP to MC1R precludes alpha-MSH initiated signaling and thus blocks production of cAMP, leading to a down-regulation of eumelanogenesis (brown/black pigment) and thus increasing synthesis of pheomelanin (yellow/red pigment). This chain is Agouti-signaling protein (ASIP), found in Cercopithecus mitis (Blue monkey).